A 102-amino-acid polypeptide reads, in one-letter code: uncharacterized protein (102 aa).

Cys-10, Cys-16, and Cys-55 together coordinate [3Fe-4S] cluster. The interval 66 to 102 is disordered; it reads DAGDDERASADPARSPAEAERHAAKDQRIPGGHDGTV. Basic and acidic residues predominate over residues 82-93; it reads AEAERHAAKDQR.

The cofactor is [3Fe-4S] cluster.

Its function is as follows. Electron transport protein for the cytochrome systems. This is an uncharacterized protein from Sinorhizobium fredii (strain NBRC 101917 / NGR234).